The sequence spans 199 residues: MTKVLVLYYSAYGHIEAMANAVAEGAREAGATVDIKRVPELVPDDVAKASYYKLDQAAPIAKIEELADYDAIIVGTGTRFGRMASQMANFLDQAGGLWAKGALNGKVGGAFTSTATQHGGQETTLFTIITNLLHFGMTIVGLNYGFAGQMKLDEVTGGSPYGATTITGGDGSRQPSENELAGARYQGRVIAETAKKLHG.

In terms of domain architecture, Flavodoxin-like spans 4-190 (VLVLYYSAYG…AGARYQGRVI (187 aa)). FMN-binding positions include 10–15 (SAYGHI) and 78–80 (TRF). Y12 contributes to the NAD(+) binding site. W98 serves as a coordination point for substrate. Residues 113–119 (STATQHG) and H134 each bind FMN.

This sequence belongs to the WrbA family. The cofactor is FMN.

The catalysed reaction is a quinone + NADH + H(+) = a quinol + NAD(+). It catalyses the reaction a quinone + NADPH + H(+) = a quinol + NADP(+). The polypeptide is NAD(P)H dehydrogenase (quinone) (Bradyrhizobium sp. (strain ORS 278)).